The sequence spans 416 residues: Neurotensin receptor type 2 (416 aa).

Topologically, residues 1–32 (METSSPWPPRPSPSAGLSLEARLGVDTRLWAK) are extracellular. A helical transmembrane segment spans residues 33-55 (VLFTALYSLIFAFGTAGNALSVH). Over 56–64 (VVLKARAGR) the chain is Cytoplasmic. The helical transmembrane segment at 65–87 (PGRLRYHVLSLALSALLLLLVSM) threads the bilayer. At 88–109 (PMELYNFVWSHYPWVFGDLGCR) the chain is on the extracellular side. Cys108 and Cys194 are oxidised to a cystine. Residues 110-131 (GYYFVRELCAYATVLSVASLSA) form a helical membrane-spanning segment. At 132-154 (ERCLAVCQPLRARRLLTPRRTRR) the chain is on the cytoplasmic side. The helical transmembrane segment at 155-176 (LLSLVWVASLGLALPMAVIMGQ) threads the bilayer. At 177 to 216 (KHEVESADGEPEPASRVCTVLVSRATLQVFIQVNVLVSFA) the chain is on the extracellular side. Residues 217–237 (LPLALTAFLNGITVNHLMALY) form a helical membrane-spanning segment. Residues 238–297 (SQVPSASAQVSSIPSRLELLSEEGLLGFITWRKTLSLGVQASLVRHKDASQIRSLQHSAQ) lie on the Cytoplasmic side of the membrane. The helical transmembrane segment at 298–318 (VLRAIVAVYVICWLPYHARRL) threads the bilayer. At 319–337 (MYCYIPDDGWTNELYDFYH) the chain is on the extracellular side. The helical transmembrane segment at 338–358 (YFYMVTNTLFYVSSAVTPILY) threads the bilayer. Residues 359–416 (NAVSSSFRKLFLESLGSLCGEQHSLVPLPQEAPESTTSTYSFRLWGSPRNPSLGEIQV) lie on the Cytoplasmic side of the membrane. Cys377 carries S-palmitoyl cysteine lipidation. The residue at position 410 (Ser410) is a Phosphoserine.

It belongs to the G-protein coupled receptor 1 family. Neurotensin receptor subfamily. NTSR2 sub-subfamily. Abundant in cortex and hypothalamus, and lower levels seen in the heart and intestine.

The protein resides in the cell membrane. Its function is as follows. Receptor for the tridecapeptide neurotensin. It is associated with G proteins that activate a phosphatidylinositol-calcium second messenger system. This is Neurotensin receptor type 2 (Ntsr2) from Rattus norvegicus (Rat).